The following is a 357-amino-acid chain: MTAAKIKVLCVDDSALIRSLMSEIINSQPDMEVVGTAPDPLVARDLIKRVNPDVLTLDVEMPRMDGLDFLERLMRLRPMPVLMVSSLTERGSEITMRALELGAVDFVTKPKLGIREGLLDYTQTIADKIRAASRARVRARAEQSAGAAPVAPMLRAPLLSTEKLIIVGASTGGTEAIKDFLTPLPPDSPAVMIVQHMPAGFTKSFAHRLNGLCRITVKEAEHGERVLPGYAYIAPGDSHLLLARSGANYVAHLSQEAPVNRHRPSVDVLFDSAAIHGGKNVTGVILTGMGKDGARGMLRMREAGAYNLAQDEQSCIVFGMPKEAIAAGGVHEVVPLHQMSQRVMAHLATFGARAQRV.

The Response regulatory domain occupies 7–124 (KVLCVDDSAL…REGLLDYTQT (118 aa)). The residue at position 58 (aspartate 58) is a 4-aspartylphosphate. In terms of domain architecture, CheB-type methylesterase spans 158–350 (LLSTEKLIIV…QRVMAHLATF (193 aa)). Catalysis depends on residues serine 170, histidine 196, and aspartate 292.

This sequence belongs to the CheB family. In terms of processing, phosphorylated by CheA. Phosphorylation of the N-terminal regulatory domain activates the methylesterase activity.

It is found in the cytoplasm. It catalyses the reaction [protein]-L-glutamate 5-O-methyl ester + H2O = L-glutamyl-[protein] + methanol + H(+). It carries out the reaction L-glutaminyl-[protein] + H2O = L-glutamyl-[protein] + NH4(+). Involved in chemotaxis. Part of a chemotaxis signal transduction system that modulates chemotaxis in response to various stimuli. Catalyzes the demethylation of specific methylglutamate residues introduced into the chemoreceptors (methyl-accepting chemotaxis proteins or MCP) by CheR. Also mediates the irreversible deamidation of specific glutamine residues to glutamic acid. The protein is Protein-glutamate methylesterase/protein-glutamine glutaminase 1 of Cupriavidus metallidurans (strain ATCC 43123 / DSM 2839 / NBRC 102507 / CH34) (Ralstonia metallidurans).